Here is a 202-residue protein sequence, read N- to C-terminus: Outer-membrane lipoprotein carrier protein (202 aa).

A signal peptide spans 1–18 (MNRLFLILLLIFSHEVFS).

Belongs to the LolA family. Monomer.

The protein localises to the periplasm. Participates in the translocation of lipoproteins from the inner membrane to the outer membrane. Only forms a complex with a lipoprotein if the residue after the N-terminal Cys is not an aspartate (The Asp acts as a targeting signal to indicate that the lipoprotein should stay in the inner membrane). The sequence is that of Outer-membrane lipoprotein carrier protein from Legionella pneumophila (strain Lens).